The sequence spans 284 residues: MQQKMIQFSGDVSLPAVGQGTWYMGEDASQRKTEVAALRAGIELGLTLIDTAEMYADGGAEKVVGEALTGLREKVFLVSKVYPWNAGGQKAINACEASLRRLNTDYLDLYLLHWSGSFAFEETVAAMEKLIAQGKIRRWGVSNLDYADMQELWQLPGGNQCATNQVLYHLGSRGIEYDLLPWCQQQQMPVMAYSPLAQAGRLRNGLLKNAVVNEIAHAHNISAAQVLLAWVISHQGVMAIPKAATIAHVQQNAAVLEVELSSAELAMLDKAYPAPKGKTALDMV.

This sequence belongs to the aldo/keto reductase family.

The enzyme catalyses hydroxyacetone + NADP(+) = methylglyoxal + NADPH + H(+). The catalysed reaction is a primary alcohol + NADP(+) = an aldehyde + NADPH + H(+). Its function is as follows. Aldo-keto reductase that contributes to cellular methylglyoxal detoxification by catalyzing the NADPH-dependent conversion of methylglyoxal to acetol. It also exhibits activity with glyoxal and probably plays a significant role in detoxification of glyoxal in vivo. Can also use aromatic aldehydes such as 4-nitrobenzaldehyde, 3-nitrobenzaldehyde and benzaldehyde, and phenylglyoxal. The chain is Methylglyoxal reductase YeaE (yeaE) from Escherichia coli (strain K12).